The chain runs to 359 residues: Quinolinate synthase (359 aa).

His-81 and Ser-99 together coordinate iminosuccinate. Position 144 (Cys-144) interacts with [4Fe-4S] cluster. Iminosuccinate is bound by residues 170 to 172 and Ser-187; that span reads YVN. Position 229 (Cys-229) interacts with [4Fe-4S] cluster. Residues 255–257 and Thr-272 contribute to the iminosuccinate site; that span reads HPE. Cys-315 contributes to the [4Fe-4S] cluster binding site.

This sequence belongs to the quinolinate synthase family. Type 2 subfamily. [4Fe-4S] cluster is required as a cofactor.

Its subcellular location is the cytoplasm. It catalyses the reaction iminosuccinate + dihydroxyacetone phosphate = quinolinate + phosphate + 2 H2O + H(+). It functions in the pathway cofactor biosynthesis; NAD(+) biosynthesis; quinolinate from iminoaspartate: step 1/1. Its function is as follows. Catalyzes the condensation of iminoaspartate with dihydroxyacetone phosphate to form quinolinate. This chain is Quinolinate synthase, found in Sinorhizobium fredii (strain NBRC 101917 / NGR234).